The following is a 340-amino-acid chain: uncharacterized protein (340 aa).

Helical transmembrane passes span 162–182 (PLVPLVAGPLPVAFFIGVLAG) and 239–259 (FWIALYFPLTMRSLCNAIVVP).

It is found in the cell membrane. This is an uncharacterized protein from Mycobacterium tuberculosis (strain CDC 1551 / Oshkosh).